The chain runs to 495 residues: Aspartyl/glutamyl-tRNA(Asn/Gln) amidotransferase subunit B (495 aa).

Belongs to the GatB/GatE family. GatB subfamily. In terms of assembly, heterotrimer of A, B and C subunits.

It catalyses the reaction L-glutamyl-tRNA(Gln) + L-glutamine + ATP + H2O = L-glutaminyl-tRNA(Gln) + L-glutamate + ADP + phosphate + H(+). The catalysed reaction is L-aspartyl-tRNA(Asn) + L-glutamine + ATP + H2O = L-asparaginyl-tRNA(Asn) + L-glutamate + ADP + phosphate + 2 H(+). In terms of biological role, allows the formation of correctly charged Asn-tRNA(Asn) or Gln-tRNA(Gln) through the transamidation of misacylated Asp-tRNA(Asn) or Glu-tRNA(Gln) in organisms which lack either or both of asparaginyl-tRNA or glutaminyl-tRNA synthetases. The reaction takes place in the presence of glutamine and ATP through an activated phospho-Asp-tRNA(Asn) or phospho-Glu-tRNA(Gln). The polypeptide is Aspartyl/glutamyl-tRNA(Asn/Gln) amidotransferase subunit B (Rippkaea orientalis (strain PCC 8801 / RF-1) (Cyanothece sp. (strain PCC 8801))).